Consider the following 660-residue polypeptide: GRIP and coiled-coil domain-containing protein 2 (660 aa).

Residues 1-28 (MSAPESSISPVPPPGSSSGGGKKLDSLP) form a disordered region. Coiled coils occupy residues 30 to 92 (EDLV…VENN), 115 to 464 (EWKE…KAIA), and 517 to 596 (DEYR…EYLK). In terms of domain architecture, GRIP spans 585–636 (ELSNEKNMEYLKNVFVQFLKPESVPAERDQLVIVLQRVLHLSPKEVEILKAA).

This chain is GRIP and coiled-coil domain-containing protein 2, found in Caenorhabditis elegans.